Here is a 429-residue protein sequence, read N- to C-terminus: MKVSIFKTLYFQVLTAITIGVLLGHFYPEIGAQMKPLGDGFVKLIKMIIAPVIFCTVVTGIAGMESMKAVGRTGAIALLYFEIVSTLALLIGLVVVNVAQPGVGMNIDPATLDAKAVALYAEQASQQGIIPFLLDIIPGSVVGAFASGNILQVLLFAVLFGFALHRLGEKGQLIFNVIESFSRVIFGVINMIMRLAPLGAFGAMAFTIGKYGVGSLVQLGQLILCFYLTCILFVVLVLGTIAKFNGFNIFKFIRYIKEELLIVLGTSSSESVLPRMLDKMENAGCKKSVVGLVIPTGYSFNLDGTSIYLTMAAVFIAQATNTHMDIMHQVTLLVVLLLSSKGAAGVTGSGFIVLAATISAVGHLPLAGLALILGIDRFMSEARALTNLVGNGVATIVVAKWCKQLDNDQLQAVLSNKVLPNVKSSVSVS.

8 helical membrane passes run 3–23 (VSIF…GVLL), 44–64 (LIKM…IAGM), 76–96 (IALL…LVVV), 144–164 (AFAS…GFAL), 184–204 (VIFG…FGAM), 222–242 (LILC…GTIA), 331–351 (TLLV…GSGF), and 352–372 (IVLA…LALI).

The protein belongs to the dicarboxylate/amino acid:cation symporter (DAACS) (TC 2.A.23) family.

Its subcellular location is the cell inner membrane. Functionally, responsible for the transport of dicarboxylates such as succinate, fumarate, and malate from the periplasm across the membrane. The sequence is that of C4-dicarboxylate transport protein from Yersinia pestis bv. Antiqua (strain Antiqua).